The primary structure comprises 338 residues: Anthocyanidin reductase ((2S)-flavan-3-ol-forming) (338 aa).

Residues 18–21 (TGFV), K48, 87–90 (VATP), and Y168 contribute to the NADP(+) site.

Belongs to the NAD(P)-dependent epimerase/dehydratase family. Dihydroflavonol-4-reductase subfamily. In terms of tissue distribution, expressed in seeds, grape skins, flowers and leaves.

The catalysed reaction is a (2S,3R)-flavan-3-ol + 2 NADP(+) = an anthocyanidin with a 3-hydroxy group + 2 NADPH + 2 H(+). It carries out the reaction a (2S,3S)-flavan-3-ol + 2 NADP(+) = an anthocyanidin with a 3-hydroxy group + 2 NADPH + 2 H(+). It participates in secondary metabolite biosynthesis; flavonoid biosynthesis. Its activity is regulated as follows. Inhibited at NaCl concentrations higher than 200 mM. Its function is as follows. Produces the terminal flavan-3-ol monomers required for the formation of proanthocyanidins or condensed tannins in leaves and flowers, as well as in the skin and seeds of developing berries. Behaves as a reductase and as a C-3 epimerase. Catalyzes the double reduction of anthocyanidins, producing a mixture of (2S,3S)- and (2S,3R)-flavan-3-ols. The enzyme catalyzes sequential hydride transfers to C-2 and C-4, respectively and epimerization at C-3 is achieved by tautomerization that occurs between the two hydride transfers. Converts cyanidin, pelargonidin and delphinidin into catechin and epicatechin, afzelechin and epiafzelechin, and gallocatechin and epigallocatechin respectively. The polypeptide is Anthocyanidin reductase ((2S)-flavan-3-ol-forming) (Vitis vinifera (Grape)).